The chain runs to 145 residues: Putative pre-16S rRNA nuclease (145 aa).

It belongs to the YqgF nuclease family.

The protein localises to the cytoplasm. Could be a nuclease involved in processing of the 5'-end of pre-16S rRNA. This Pseudomonas fluorescens protein is Putative pre-16S rRNA nuclease.